A 608-amino-acid polypeptide reads, in one-letter code: Chaperone protein DnaK (608 aa).

Thr-175 carries the post-translational modification Phosphothreonine; by autocatalysis.

This sequence belongs to the heat shock protein 70 family.

Its function is as follows. Acts as a chaperone. This is Chaperone protein DnaK from Finegoldia magna (strain ATCC 29328 / DSM 20472 / WAL 2508) (Peptostreptococcus magnus).